A 424-amino-acid polypeptide reads, in one-letter code: Probable ribonuclease FAU-1 (424 aa).

This sequence belongs to the FAU-1 family.

Its function is as follows. Probable RNase involved in rRNA stability through maturation and/or degradation of precursor rRNAs. Binds to RNA in loop regions with AU-rich sequences. The sequence is that of Probable ribonuclease FAU-1 from Saccharolobus islandicus (strain L.S.2.15 / Lassen #1) (Sulfolobus islandicus).